The following is an 847-amino-acid chain: Acyl-homoserine lactone acylase QuiP (847 aa).

The first 26 residues, Met-1–Ala-26, serve as a signal peptide directing secretion. Residue Ser-265 is the Nucleophile of the active site.

The protein belongs to the peptidase S45 family. In terms of assembly, heterodimer of an alpha subunit and a beta subunit processed from the same precursor.

It localises to the periplasm. The enzyme catalyses an N-acyl-L-homoserine lactone + H2O = L-homoserine lactone + a carboxylate. Catalyzes the deacylation of acyl-homoserine lactone (AHL or acyl-HSL), releasing homoserine lactone (HSL) and the corresponding fatty acid. Possesses a specificity for the degradation of long-chain acyl-HSLs (side chains of seven or more carbons in length). Appears to be the acyl-HSL acylase that underlies the ability of P.aeruginosa to degrade and utilize certain acyl-HSLs as growth nutrients, including one of its own quorum signals, 3-oxo-C12-HSL. Is thought to have a role in quorum quenching. The polypeptide is Acyl-homoserine lactone acylase QuiP (quiP) (Pseudomonas aeruginosa (strain ATCC 15692 / DSM 22644 / CIP 104116 / JCM 14847 / LMG 12228 / 1C / PRS 101 / PAO1)).